Consider the following 225-residue polypeptide: GrpE protein homolog 2, mitochondrial (225 aa).

A mitochondrion-targeting transit peptide spans 1–32 (MAVRSLWACRLRVQRLLAWSAAWESKGWPLPF). Residue lysine 142 is modified to N6-acetyllysine.

Belongs to the GrpE family. Probable component of the PAM complex at least composed of a mitochondrial HSP70 protein, GRPEL1 or GRPEL2, TIMM44, TIMM16/PAM16 and TIMM14/DNAJC19.

The protein localises to the mitochondrion matrix. In terms of biological role, essential component of the PAM complex, a complex required for the translocation of transit peptide-containing proteins from the inner membrane into the mitochondrial matrix in an ATP-dependent manner. Seems to control the nucleotide-dependent binding of mitochondrial HSP70 to substrate proteins. Stimulates ATPase activity of mt-HSP70. May also serve to modulate the interconversion of oligomeric (inactive) and monomeric (active) forms of mt-HSP70. The chain is GrpE protein homolog 2, mitochondrial (GRPEL2) from Pongo abelii (Sumatran orangutan).